We begin with the raw amino-acid sequence, 780 residues long: ATP-dependent 6-phosphofructokinase, liver type (780 aa).

Ala-2 carries the N-acetylalanine modification. The interval 2 to 390 (ATVDLEKLRM…NWKIYKLLAH (389 aa)) is N-terminal catalytic PFK domain 1. ATP is bound by residues Gly-25, 88-89 (RC), and 118-121 (GDGS). Asp-119 is a Mg(2+) binding site. Substrate-binding positions include 164-166 (SID), Arg-201, 208-210 (MGR), Glu-264, Arg-292, and 298-301 (HVQR). Asp-166 functions as the Proton acceptor in the catalytic mechanism. A Phosphoserine modification is found at Ser-377. Residues 391-400 (QKVSKEKSNF) form an interdomain linker region. The tract at residues 401-780 (SLAILNVGAP…RRTLSIDKGF (380 aa)) is C-terminal regulatory PFK domain 2. Residues Arg-470, 527-531 (TISNN), Arg-565, 572-574 (MGG), and Glu-628 each bind beta-D-fructose 2,6-bisphosphate. The O-linked (GlcNAc) serine glycan is linked to Ser-529. Tyr-640 carries the post-translational modification Phosphotyrosine. Beta-D-fructose 2,6-bisphosphate-binding positions include Arg-654, 660–663 (HLQQ), and Arg-734. Ser-775 carries the phosphoserine modification.

This sequence belongs to the phosphofructokinase type A (PFKA) family. ATP-dependent PFK group I subfamily. Eukaryotic two domain clade 'E' sub-subfamily. In terms of assembly, homo- and heterotetramers. Phosphofructokinase (PFK) enzyme functions as a tetramer composed of different combinations of 3 types of subunits, called PFKM (M), PFKL (L) and PFKP (P). The composition of the PFK tetramer differs according to the tissue type it is present in. The kinetic and regulatory properties of the tetrameric enzyme are dependent on the subunit composition, hence can vary across tissues. Mg(2+) serves as cofactor. GlcNAcylation at Ser-529 by OGT decreases enzyme activity, leading to redirect glucose flux through the oxidative pentose phosphate pathway. Glycosylation is stimulated by both hypoxia and glucose deprivation.

It is found in the cytoplasm. It carries out the reaction beta-D-fructose 6-phosphate + ATP = beta-D-fructose 1,6-bisphosphate + ADP + H(+). It participates in carbohydrate degradation; glycolysis; D-glyceraldehyde 3-phosphate and glycerone phosphate from D-glucose: step 3/4. Its activity is regulated as follows. Allosterically activated by ADP, AMP, or fructose 2,6-bisphosphate, and allosterically inhibited by ATP or citrate. GlcNAcylation by OGT overcomes allosteric regulation. Catalyzes the phosphorylation of D-fructose 6-phosphate to fructose 1,6-bisphosphate by ATP, the first committing step of glycolysis. Negatively regulates the phagocyte oxidative burst in response to bacterial infection by controlling cellular NADPH biosynthesis and NADPH oxidase-derived reactive oxygen species. Upon macrophage activation, drives the metabolic switch toward glycolysis, thus preventing glucose turnover that produces NADPH via pentose phosphate pathway. The chain is ATP-dependent 6-phosphofructokinase, liver type from Mus musculus (Mouse).